The sequence spans 756 residues: Sodium/hydrogen exchanger 8 (756 aa).

At 1–31 the chain is on the extracellular side; sequence MTSIIGAALPYKSPEKAIASSSYSAENDSSP. N-linked (GlcNAc...) asparagine glycosylation occurs at Asn27. Residues 32-52 traverse the membrane as a helical segment; the sequence is VDAVIFAGTSLVLGTACRYLF. Topologically, residues 53–56 are cytoplasmic; the sequence is NGTR. Residues 57–77 traverse the membrane as a helical segment; it reads VPYTVVLLVIGIFLGSLEYGT. Over 78–89 the chain is Extracellular; the sequence is KHNLGKLGHGIR. Residues 90–110 form a helical membrane-spanning segment; that stretch reads IWNGINPDLLLAVFLPVLLFE. The Cytoplasmic portion of the chain corresponds to 111–125; that stretch reads SSFSMDVHQIKRCMG. Residues 126–146 form a helical membrane-spanning segment; sequence QMVLLAGPGVLISTFCLGALI. At 147–157 the chain is on the extracellular side; it reads KLTFPYNWDWK. A helical membrane pass occupies residues 158 to 178; that stretch reads TSLLLGGLLGATDPVAVVALL. The Cytoplasmic portion of the chain corresponds to 179–194; the sequence is KELGASKKMTTLIDGE. A helical transmembrane segment spans residues 195 to 215; sequence SLMNDGVSVVVFQLFFKMVMG. Topologically, residues 216–225 are extracellular; it reads HNSDWGSIIK. Residues 226–248 traverse the membrane as a helical segment; it reads FLVQNSFGAVGIGLAFGIASVFW. At 249–251 the chain is on the cytoplasmic side; that stretch reads LKF. The helical transmembrane segment at 252 to 271 threads the bilayer; that stretch reads IFNDTVAQITVTLSASYFAY. Topologically, residues 272 to 276 are extracellular; the sequence is YTAQE. Residues 277–297 form a helical membrane-spanning segment; that stretch reads WAGVSGILTVMILGMFFAAFA. Topologically, residues 298–311 are cytoplasmic; sequence RTAFKGDSHQSLHH. Residues 312-332 form a helical membrane-spanning segment; sequence FWEMAAYIANTLVFMLSGVII. Residues 333–350 are Extracellular-facing; that stretch reads AESVLSGQTISYKGNSWS. The helical transmembrane segment at 351-371 threads the bilayer; sequence FLFLLYLYVQLSRCVVVGVLY. The Cytoplasmic segment spans residues 372–385; that stretch reads PLLCRSGYGLDWKE. A helical membrane pass occupies residues 386–406; it reads SIILTWSGLRGAVSLSLALSV. Residues 407 to 422 lie on the Extracellular side of the membrane; that stretch reads KQSSGNSYLSSDTGTR. A helical membrane pass occupies residues 423–443; sequence FLFLTGGIVFLTLVVNGSTTQ. The Cytoplasmic segment spans residues 444–756; that stretch reads LLLHLLRMDT…RSLAIGETDA (313 aa).

The protein belongs to the monovalent cation:proton antiporter 1 (CPA1) transporter (TC 2.A.36) family.

Its subcellular location is the cell membrane. It carries out the reaction Na(+)(in) + H(+)(out) = Na(+)(out) + H(+)(in). The catalysed reaction is K(+)(in) + H(+)(out) = K(+)(out) + H(+)(in). In terms of biological role, may act in low affinity electroneutral exchange of protons for cations such as Na(+) or K(+) across membranes. May also exchange Li(+) and Cs(+) with a lower affinity. The chain is Sodium/hydrogen exchanger 8 (NHX8) from Arabidopsis thaliana (Mouse-ear cress).